Consider the following 141-residue polypeptide: Large-conductance mechanosensitive channel (141 aa).

The next 2 membrane-spanning stretches (helical) occupy residues 16 to 36 (VIDLAVGVIIGGAFGKIVDSL) and 83 to 103 (GAFINTTIDFLIIALAIFVAI).

Belongs to the MscL family. Homopentamer.

It localises to the cell inner membrane. Functionally, channel that opens in response to stretch forces in the membrane lipid bilayer. May participate in the regulation of osmotic pressure changes within the cell. This is Large-conductance mechanosensitive channel from Azoarcus sp. (strain BH72).